The following is a 361-amino-acid chain: S-adenosylmethionine:tRNA ribosyltransferase-isomerase (361 aa).

Belongs to the QueA family. As to quaternary structure, monomer.

It localises to the cytoplasm. It catalyses the reaction 7-aminomethyl-7-carbaguanosine(34) in tRNA + S-adenosyl-L-methionine = epoxyqueuosine(34) in tRNA + adenine + L-methionine + 2 H(+). The protein operates within tRNA modification; tRNA-queuosine biosynthesis. Its function is as follows. Transfers and isomerizes the ribose moiety from AdoMet to the 7-aminomethyl group of 7-deazaguanine (preQ1-tRNA) to give epoxyqueuosine (oQ-tRNA). In Haemophilus ducreyi (strain 35000HP / ATCC 700724), this protein is S-adenosylmethionine:tRNA ribosyltransferase-isomerase.